The sequence spans 600 residues: Methionine--tRNA ligase (600 aa).

Residues 11–21 carry the 'HIGH' region motif; sequence PYANGPRHIGH. Zn(2+) contacts are provided by cysteine 143, cysteine 146, cysteine 156, and cysteine 159. The short motif at 351 to 355 is the 'KMSKS' region element; it reads KFSSS. Serine 354 contacts ATP.

It belongs to the class-I aminoacyl-tRNA synthetase family. MetG type 1 subfamily. As to quaternary structure, monomer. Zn(2+) serves as cofactor.

It localises to the cytoplasm. The enzyme catalyses tRNA(Met) + L-methionine + ATP = L-methionyl-tRNA(Met) + AMP + diphosphate. Functionally, is required not only for elongation of protein synthesis but also for the initiation of all mRNA translation through initiator tRNA(fMet) aminoacylation. The sequence is that of Methionine--tRNA ligase from Salinispora arenicola (strain CNS-205).